Here is a 318-residue protein sequence, read N- to C-terminus: Lysophospholipase D GDPD3 (318 aa).

The Cytoplasmic segment spans residues 1–2 (MS). Residues 3 to 23 (LLLYYALPALGSYAMLSIFFL) traverse the membrane as a helical segment. The Extracellular portion of the chain corresponds to 24-198 (RRPHLLHTPR…KAANPEMPLS (175 aa)). The 270-residue stretch at 39-308 (IRLGAHRGGS…DYPTALRHYL (270 aa)) folds into the GP-PDE domain. The a divalent metal cation site is built by E71, D73, and H86. The chain crosses the membrane as a helical span at residues 199 to 221 (FTISRGFWVLLSYYLGLLPFIPI). The Cytoplasmic portion of the chain corresponds to 222 to 318 (PEKFFFCFLP…DNHGPAARTS (97 aa)).

Belongs to the glycerophosphoryl diester phosphodiesterase family. As to expression, widely expressed, with high level in kidney and ovary.

The protein resides in the membrane. The protein localises to the cytoplasm. Its subcellular location is the perinuclear region. It localises to the endoplasmic reticulum. The catalysed reaction is 1-hexadecanoyl-sn-glycero-3-phosphocholine + H2O = 1-hexadecanoyl-sn-glycero-3-phosphate + choline + H(+). It catalyses the reaction 1-hexadecanoyl-sn-glycero-3-phosphocholine + H2O = sn-glycerol 3-phosphocholine + hexadecanoate + H(+). The enzyme catalyses 1-O-(1Z-octadecenyl)-sn-glycero-3-phospho-N-hexadecanoyl-ethanolamine + H2O = 1-O-(1Z-octadecenyl)-sn-glycero-3-phosphate + N-hexadecanoylethanolamine + H(+). It carries out the reaction N-(5Z,8Z,11Z,14Z-eicosatetraenoyl)-1-(9Z-octadecenoyl)-sn-glycero-3-phosphoethanolamine + H2O = N-(5Z,8Z,11Z,14Z-eicosatetraenoyl)-ethanolamine + 1-(9Z-octadecenoyl)-sn-glycero-3-phosphate + H(+). The catalysed reaction is N,1-di-(9Z-octadecenoyl)-sn-glycero-3-phosphoethanolamine + H2O = N-(9Z-octadecenoyl) ethanolamine + 1-(9Z-octadecenoyl)-sn-glycero-3-phosphate + H(+). It catalyses the reaction N-hexadecanoyl-1-(9Z-octadecenoyl)-sn-glycero-3-phosphoethanolamine + H2O = N-hexadecanoylethanolamine + 1-(9Z-octadecenoyl)-sn-glycero-3-phosphate + H(+). The enzyme catalyses 1-O-hexadecyl-sn-glycero-3-phosphocholine + H2O = 1-O-hexadecyl-sn-glycero-3-phosphate + choline + H(+). Its activity is regulated as follows. Lysophospholipase D activity is stimulated by calcium. Loss of lysophospholipase D activity in presence of EDTA. Functionally, hydrolyzes lysoglycerophospholipids to produce lysophosphatidic acid (LPA) and the corresponding amines. Shows a preference for 1-O-alkyl-sn-glycero-3-phosphocholine (lyso-PAF), lysophosphatidylcholine (lyso-PC) and N-acylethanolamine lysophospholipids. Does not display glycerophosphodiester phosphodiesterase activity, since it cannot hydrolyze either glycerophosphoinositol or glycerophosphocholine. The polypeptide is Lysophospholipase D GDPD3 (Homo sapiens (Human)).